A 619-amino-acid polypeptide reads, in one-letter code: Replication restart protein PriA (619 aa).

The region spanning 119-285 (LKELQKHSAS…KDKALVRLKG (167 aa)) is the Helicase ATP-binding domain. 132-139 (GDTGSGKT) lines the ATP pocket. Residues 228–231 (DEEH) carry the DEAH box motif. Zn(2+) contacts are provided by cysteine 336, cysteine 339, cysteine 345, cysteine 348, cysteine 363, cysteine 366, cysteine 376, and cysteine 379. Residues 371-532 (PIPKICSACQ…ELYPPFSRLC (162 aa)) form the Helicase C-terminal domain.

This sequence belongs to the helicase family. PriA subfamily. As to quaternary structure, component of the replication restart primosome. Zn(2+) serves as cofactor.

It catalyses the reaction Couples ATP hydrolysis with the unwinding of duplex DNA by translocating in the 3'-5' direction.. The enzyme catalyses ATP + H2O = ADP + phosphate + H(+). Initiates the restart of stalled replication forks, which reloads the replicative helicase on sites other than the origin of replication. Recognizes and binds to abandoned replication forks and remodels them to uncover a helicase loading site. Promotes assembly of the primosome at these replication forks. Its function is as follows. Important for survival of the bacteria in host cells. The protein is Replication restart protein PriA of Helicobacter pylori (strain ATCC 700392 / 26695) (Campylobacter pylori).